The sequence spans 560 residues: Membrane protein insertase YidC (560 aa).

The helical transmembrane segment at 7 to 27 (ILIVALAIVSYVMVLKWNQDY) threads the bilayer. The tract at residues 43–72 (APAIPDTPLGNNASASADVPSANGETSAPL) is disordered. 4 helical membrane-spanning segments follow: residues 367 to 387 (IVGN…GIFF), 437 to 457 (LGGC…YWVL), 468 to 488 (FMLW…PIIM), and 515 to 535 (PIIF…YWVV).

The protein belongs to the OXA1/ALB3/YidC family. Type 1 subfamily. As to quaternary structure, interacts with the Sec translocase complex via SecD. Specifically interacts with transmembrane segments of nascent integral membrane proteins during membrane integration.

It is found in the cell inner membrane. In terms of biological role, required for the insertion and/or proper folding and/or complex formation of integral membrane proteins into the membrane. Involved in integration of membrane proteins that insert both dependently and independently of the Sec translocase complex, as well as at least some lipoproteins. Aids folding of multispanning membrane proteins. The protein is Membrane protein insertase YidC of Pseudomonas fluorescens (strain SBW25).